The following is a 259-amino-acid chain: Troponin T, fast skeletal muscle (259 aa).

Residues 1–36 (MSDEETEQVEEQYEEEEEAQEEEVQEEAPEPEEVQE) are compositionally biased toward acidic residues. The disordered stretch occupies residues 1–62 (MSDEETEQVE…EKVDFDDIQK (62 aa)). An N-acetylserine modification is found at serine 2. Serine 2 is modified (phosphoserine). Basic and acidic residues predominate over residues 50–62 (PEGEKVDFDDIQK). Serine 78 carries the phosphoserine modification. The segment covering 101–143 (RAERAEQQRIRAEKERERQNRLAEEKARREEEDAKRRAEDDLK) has biased composition (basic and acidic residues). Residues 101 to 180 (RAERAEQQRI…TAREMKKKIL (80 aa)) are disordered. Phosphoserine occurs at positions 149, 156, and 157. The segment covering 171–180 (TAREMKKKIL) has biased composition (basic and acidic residues). At serine 193 the chain carries Phosphoserine. Position 209 is a phosphotyrosine (tyrosine 209). Positions 235-259 (RIDQAQKHSKKAGATAKGKVGGRWK) are disordered.

The protein belongs to the troponin T family.

Functionally, troponin T is the tropomyosin-binding subunit of troponin, the thin filament regulatory complex which confers calcium-sensitivity to striated muscle actomyosin ATPase activity. The protein is Troponin T, fast skeletal muscle (Tnnt3) of Rattus norvegicus (Rat).